Reading from the N-terminus, the 372-residue chain is Queuine tRNA-ribosyltransferase (372 aa).

The active-site Proton acceptor is D92. Residues 92–96, D146, Q188, and G215 contribute to the substrate site; that span reads DSGGY. The tract at residues 246–252 is RNA binding; that stretch reads GIGSLKE. Residue D265 is the Nucleophile of the active site. The segment at 270-274 is RNA binding; important for wobble base 34 recognition; that stretch reads TRLGR. C303, C305, C308, and H334 together coordinate Zn(2+).

Belongs to the queuine tRNA-ribosyltransferase family. As to quaternary structure, homodimer. Within each dimer, one monomer is responsible for RNA recognition and catalysis, while the other monomer binds to the replacement base PreQ1. The cofactor is Zn(2+).

The catalysed reaction is 7-aminomethyl-7-carbaguanine + guanosine(34) in tRNA = 7-aminomethyl-7-carbaguanosine(34) in tRNA + guanine. The protein operates within tRNA modification; tRNA-queuosine biosynthesis. Its function is as follows. Catalyzes the base-exchange of a guanine (G) residue with the queuine precursor 7-aminomethyl-7-deazaguanine (PreQ1) at position 34 (anticodon wobble position) in tRNAs with GU(N) anticodons (tRNA-Asp, -Asn, -His and -Tyr). Catalysis occurs through a double-displacement mechanism. The nucleophile active site attacks the C1' of nucleotide 34 to detach the guanine base from the RNA, forming a covalent enzyme-RNA intermediate. The proton acceptor active site deprotonates the incoming PreQ1, allowing a nucleophilic attack on the C1' of the ribose to form the product. After dissociation, two additional enzymatic reactions on the tRNA convert PreQ1 to queuine (Q), resulting in the hypermodified nucleoside queuosine (7-(((4,5-cis-dihydroxy-2-cyclopenten-1-yl)amino)methyl)-7-deazaguanosine). The polypeptide is Queuine tRNA-ribosyltransferase (Prochlorococcus marinus (strain MIT 9301)).